The sequence spans 177 residues: MSRVGKKPVPVPSGVTATVTGQTVKMKGSKGELQFVVPPQVIVEFKDGAVSVQPKDQSKQARSLWGTSRAQVANLVEGVSKGFEKKLEITGVGYRAAMAGKALKLSLGYSHDIEYEIPAGITIVTPKPTEIVVSGIDRQRVGQVAAEIREYRGPEPYKGKGVKYAGEFIFRKEGKKK.

This sequence belongs to the universal ribosomal protein uL6 family. Part of the 50S ribosomal subunit.

Functionally, this protein binds to the 23S rRNA, and is important in its secondary structure. It is located near the subunit interface in the base of the L7/L12 stalk, and near the tRNA binding site of the peptidyltransferase center. This chain is Large ribosomal subunit protein uL6, found in Methylorubrum populi (strain ATCC BAA-705 / NCIMB 13946 / BJ001) (Methylobacterium populi).